A 426-amino-acid polypeptide reads, in one-letter code: Histidine--tRNA ligase (426 aa).

The protein belongs to the class-II aminoacyl-tRNA synthetase family.

It is found in the cytoplasm. The enzyme catalyses tRNA(His) + L-histidine + ATP = L-histidyl-tRNA(His) + AMP + diphosphate + H(+). The chain is Histidine--tRNA ligase from Saccharolobus solfataricus (strain ATCC 35092 / DSM 1617 / JCM 11322 / P2) (Sulfolobus solfataricus).